Consider the following 455-residue polypeptide: MSQQDKKLTGVFGHPVSDRENSMTAGPRGPLLMQDIYFLEQMSQFDREVIPERRMHAKGSGAFGTFTVTKDITKYTNAKIFSEIGKQTEMFARFSTVAGERGAADAESDIRGFALKFYTEEGNWDLVGNNTPVFFFRDPKLFVSLNRAVKRDPRTNMRDAQNNWDFWTGLPEALHQVTILMSDRGIPKDLRHMHGFGSHTYSMYNDSGERVWVKLHFRTQQGIENLTDEEAAEIIATGRDSSQRDLFEAIEKGDYPKWTMYIQVMTEEQAKNHKDNPFDLTKVWYHDEYPLIEVGEFELNRNPDNYFMDVEQVAFASTNIIPGLDFSPDKMLQGRLFSYGDAQRYRLGVNHWQIPVNQPKGVGIENICPFSRDGQMRVVDNNQGGGTHYYPNNHGKFDSQPEYKKPPFPTDGYGYEYNQRQDDDNYFEQPGKLFRLQSEGAKERILQIQQMQWKA.

Residues 1–25 (MSQQDKKLTGVFGHPVSDRENSMTA) are disordered.

Belongs to the catalase family.

In terms of biological role, catalytically inactive. The protein is Catalase-like protein (katB) of Staphylococcus aureus.